The primary structure comprises 144 residues: Large ribosomal subunit protein uL16 (144 aa).

The segment covering 1 to 19 has biased composition (basic residues); it reads MLLPKRVKYRRQHRPKTTG. Residues 1 to 23 form a disordered region; the sequence is MLLPKRVKYRRQHRPKTTGRSKG.

The protein belongs to the universal ribosomal protein uL16 family. In terms of assembly, part of the 50S ribosomal subunit.

Binds 23S rRNA and is also seen to make contacts with the A and possibly P site tRNAs. The sequence is that of Large ribosomal subunit protein uL16 from Staphylococcus carnosus (strain TM300).